A 91-amino-acid chain; its full sequence is UPF0147 protein APE_2336a (91 aa).

The protein belongs to the UPF0147 family.

This Aeropyrum pernix (strain ATCC 700893 / DSM 11879 / JCM 9820 / NBRC 100138 / K1) protein is UPF0147 protein APE_2336a.